The primary structure comprises 462 residues: Bifunctional protein GlmU (462 aa).

The interval M1–K235 is pyrophosphorylase. Residues L11–G14, K25, Q80, G85–T86, Y107–D109, G144, E159, and N233 each bind UDP-N-acetyl-alpha-D-glucosamine. D109 serves as a coordination point for Mg(2+). N233 contacts Mg(2+). A linker region spans residues S236–S256. The tract at residues G257–K462 is N-acetyltransferase. Positions 339 and 357 each coordinate UDP-N-acetyl-alpha-D-glucosamine. H369 acts as the Proton acceptor in catalysis. Residues Y372 and N383 each contribute to the UDP-N-acetyl-alpha-D-glucosamine site. Acetyl-CoA-binding positions include A386, N392 to Y393, A429, and R446.

In the N-terminal section; belongs to the N-acetylglucosamine-1-phosphate uridyltransferase family. This sequence in the C-terminal section; belongs to the transferase hexapeptide repeat family. In terms of assembly, homotrimer. The cofactor is Mg(2+).

It localises to the cytoplasm. The enzyme catalyses alpha-D-glucosamine 1-phosphate + acetyl-CoA = N-acetyl-alpha-D-glucosamine 1-phosphate + CoA + H(+). It carries out the reaction N-acetyl-alpha-D-glucosamine 1-phosphate + UTP + H(+) = UDP-N-acetyl-alpha-D-glucosamine + diphosphate. The protein operates within nucleotide-sugar biosynthesis; UDP-N-acetyl-alpha-D-glucosamine biosynthesis; N-acetyl-alpha-D-glucosamine 1-phosphate from alpha-D-glucosamine 6-phosphate (route II): step 2/2. It functions in the pathway nucleotide-sugar biosynthesis; UDP-N-acetyl-alpha-D-glucosamine biosynthesis; UDP-N-acetyl-alpha-D-glucosamine from N-acetyl-alpha-D-glucosamine 1-phosphate: step 1/1. It participates in bacterial outer membrane biogenesis; LPS lipid A biosynthesis. Functionally, catalyzes the last two sequential reactions in the de novo biosynthetic pathway for UDP-N-acetylglucosamine (UDP-GlcNAc). The C-terminal domain catalyzes the transfer of acetyl group from acetyl coenzyme A to glucosamine-1-phosphate (GlcN-1-P) to produce N-acetylglucosamine-1-phosphate (GlcNAc-1-P), which is converted into UDP-GlcNAc by the transfer of uridine 5-monophosphate (from uridine 5-triphosphate), a reaction catalyzed by the N-terminal domain. The protein is Bifunctional protein GlmU of Blochmanniella pennsylvanica (strain BPEN).